The following is a 196-amino-acid chain: DnaA initiator-associating protein DiaA (196 aa).

Residues 34–196 (LVQSLLNGNK…DSTLFPHQDE (163 aa)) enclose the SIS domain.

It belongs to the SIS family. DiaA subfamily. In terms of assembly, homotetramer; dimer of dimers.

Its function is as follows. Required for the timely initiation of chromosomal replication via direct interactions with the DnaA initiator protein. This is DnaA initiator-associating protein DiaA from Serratia proteamaculans (strain 568).